The chain runs to 398 residues: 8-amino-7-oxononanoate synthase (398 aa).

Residues Arg22 and Arg29 each coordinate substrate. 109 to 110 is a pyridoxal 5'-phosphate binding site; sequence GW. A substrate-binding site is contributed by His141. Pyridoxal 5'-phosphate is bound by residues Ser189, 214–217, and 242–245; these read DEAH and TFSK. Lys245 bears the N6-(pyridoxal phosphate)lysine mark. Thr359 lines the substrate pocket.

This sequence belongs to the class-II pyridoxal-phosphate-dependent aminotransferase family. BioF subfamily. Homodimer. The cofactor is pyridoxal 5'-phosphate.

The enzyme catalyses 6-carboxyhexanoyl-[ACP] + L-alanine + H(+) = (8S)-8-amino-7-oxononanoate + holo-[ACP] + CO2. It participates in cofactor biosynthesis; biotin biosynthesis. In terms of biological role, catalyzes the decarboxylative condensation of pimeloyl-[acyl-carrier protein] and L-alanine to produce 8-amino-7-oxononanoate (AON), [acyl-carrier protein], and carbon dioxide. The sequence is that of 8-amino-7-oxononanoate synthase from Gluconacetobacter diazotrophicus (strain ATCC 49037 / DSM 5601 / CCUG 37298 / CIP 103539 / LMG 7603 / PAl5).